The following is a 457-amino-acid chain: Dihydrolipoyllysine-residue acetyltransferase component of pyruvate dehydrogenase complex, mitochondrial (457 aa).

Residues 1 to 30 constitute a mitochondrion transit peptide; it reads MLSAALRRRVLAPTHSALRTGFAAHVVRHY. The 77-residue stretch at 36 to 112 folds into the Lipoyl-binding domain; sequence HQVIKMPALS…PVGSPIAVLV (77 aa). N6-lipoyllysine is present on Lys77. The interval 129 to 168 is disordered; it reads AGGDAAKPAAPKKEEKSESKSESASAPEPTPEPQQYQSQG. Residues 139 to 149 are compositionally biased toward basic and acidic residues; that stretch reads PKKEEKSESKS. An N6-crotonyllysine modification is found at Lys148. The Peripheral subunit-binding (PSBD) domain maps to 179-216; that stretch reads NISASAKRLAREKGISIDGLKGTGKNGQITEEDVKKAI. Catalysis depends on residues His430 and Asp434.

Belongs to the 2-oxoacid dehydrogenase family. As to quaternary structure, eukaryotic pyruvate dehydrogenase (PDH) complexes are organized as a core consisting of the oligomeric dihydrolipoamide acetyl-transferase (E2), around which are arranged multiple copies of pyruvate dehydrogenase (E1), dihydrolipoamide dehydrogenase (E3) and protein X (E3BP) bound by non-covalent bonds. Interacts with SIR5; the interaction is direct. (R)-lipoate serves as cofactor. Post-translationally, decrotonylated at 'Lys-148' by SIR5, which inhibits the activity of the pyruvate dehydrogenase complex (PDC).

Its subcellular location is the mitochondrion matrix. It catalyses the reaction N(6)-[(R)-dihydrolipoyl]-L-lysyl-[protein] + acetyl-CoA = N(6)-[(R)-S(8)-acetyldihydrolipoyl]-L-lysyl-[protein] + CoA. In terms of biological role, the pyruvate dehydrogenase complex catalyzes the overall conversion of pyruvate to acetyl-CoA and CO(2). High pyruvate dehydrogenase complex activity is required for sufficient energy production during germination of conidia. This chain is Dihydrolipoyllysine-residue acetyltransferase component of pyruvate dehydrogenase complex, mitochondrial, found in Fusarium oxysporum f. sp. lycopersici (strain 4287 / CBS 123668 / FGSC 9935 / NRRL 34936) (Fusarium vascular wilt of tomato).